The following is a 668-amino-acid chain: Kelch repeat-containing protein ARB_01230 (668 aa).

The signal sequence occupies residues 1–32 (MEVGRFASKSASMTYLLLVLLVGFILPQQGQH). The Extracellular segment spans residues 33-522 (AHARTLARRD…GSGSDGPNIA (490 aa)). Residue Asn60 is glycosylated (N-linked (GlcNAc...) asparagine). Kelch repeat units follow at residues 62–108 (TLYI…PRGD) and 125–176 (SLFL…ANIP). Residues Asn251 and Asn291 are each glycosylated (N-linked (GlcNAc...) asparagine). Kelch repeat units follow at residues 283 to 331 (ILGL…AVAA), 340 to 395 (QVYL…IWNS), 396 to 445 (QIVV…ASQT), and 463 to 509 (VQSV…GPHA). The helical transmembrane segment at 523-543 (AIVAGVIAGCLGVLAIYLGFV) threads the bilayer. Topologically, residues 544–668 (TWLYRRRLAI…PRQTLRVINQ (125 aa)) are cytoplasmic. Residues 611–642 (DNQRHNHTRSSSGGNFDHLAQPERPSTSSSVE) are disordered.

The protein resides in the membrane. It is found in the secreted. In Arthroderma benhamiae (strain ATCC MYA-4681 / CBS 112371) (Trichophyton mentagrophytes), this protein is Kelch repeat-containing protein ARB_01230.